The following is a 360-amino-acid chain: Photosystem II protein D1 (360 aa).

Helical transmembrane passes span 29–46, 118–133, and 142–156; these read YIGW…SAIS, HFFI…EWEL, and WICV…AAAA. Histidine 118 contacts chlorophyll a. Residue tyrosine 126 participates in pheophytin a binding. 2 residues coordinate [CaMn4O5] cluster: aspartate 170 and glutamate 189. The helical transmembrane segment at 197 to 218 threads the bilayer; it reads FHMLGVAGVFGGSLFSAMHGSL. Histidine 198 contacts chlorophyll a. Residues histidine 215 and 264-265 contribute to the a quinone site; that span reads SF. Histidine 215 lines the Fe cation pocket. Histidine 272 serves as a coordination point for Fe cation. The chain crosses the membrane as a helical span at residues 274–288; it reads FLGAWPVVGIWFTAM. The [CaMn4O5] cluster site is built by histidine 332, glutamate 333, aspartate 342, and alanine 344. The propeptide occupies 345–360; sequence AGESLPVALVAPAVAA.

It belongs to the reaction center PufL/M/PsbA/D family. As to quaternary structure, PSII is composed of 1 copy each of membrane proteins PsbA, PsbB, PsbC, PsbD, PsbE, PsbF, PsbH, PsbI, PsbJ, PsbK, PsbL, PsbM, PsbT, PsbX, PsbY, PsbZ, Psb30/Ycf12, at least 3 peripheral proteins of the oxygen-evolving complex and a large number of cofactors. It forms dimeric complexes. The cofactor is The D1/D2 heterodimer binds P680, chlorophylls that are the primary electron donor of PSII, and subsequent electron acceptors. It shares a non-heme iron and each subunit binds pheophytin, quinone, additional chlorophylls, carotenoids and lipids. D1 provides most of the ligands for the Mn4-Ca-O5 cluster of the oxygen-evolving complex (OEC). There is also a Cl(-1) ion associated with D1 and D2, which is required for oxygen evolution. The PSII complex binds additional chlorophylls, carotenoids and specific lipids.. Post-translationally, tyr-161 forms a radical intermediate that is referred to as redox-active TyrZ, YZ or Y-Z. In terms of processing, C-terminally processed by CTPA; processing is essential to allow assembly of the oxygen-evolving complex and thus photosynthetic growth.

Its subcellular location is the plastid. The protein localises to the chloroplast thylakoid membrane. It catalyses the reaction 2 a plastoquinone + 4 hnu + 2 H2O = 2 a plastoquinol + O2. Photosystem II (PSII) is a light-driven water:plastoquinone oxidoreductase that uses light energy to abstract electrons from H(2)O, generating O(2) and a proton gradient subsequently used for ATP formation. It consists of a core antenna complex that captures photons, and an electron transfer chain that converts photonic excitation into a charge separation. The D1/D2 (PsbA/PsbD) reaction center heterodimer binds P680, the primary electron donor of PSII as well as several subsequent electron acceptors. This chain is Photosystem II protein D1, found in Emiliania huxleyi (Coccolithophore).